The sequence spans 447 residues: Tyrosine aminotransferase (447 aa).

K273 carries the N6-(pyridoxal phosphate)lysine modification. S441 carries the post-translational modification Phosphoserine.

It belongs to the class-I pyridoxal-phosphate-dependent aminotransferase family. As to quaternary structure, homodimer. It depends on pyridoxal 5'-phosphate as a cofactor.

It catalyses the reaction L-tyrosine + 2-oxoglutarate = 3-(4-hydroxyphenyl)pyruvate + L-glutamate. Its pathway is amino-acid degradation; L-phenylalanine degradation; acetoacetate and fumarate from L-phenylalanine: step 2/6. In terms of biological role, transaminase involved in tyrosine breakdown. Converts tyrosine to p-hydroxyphenylpyruvate. Can catalyze the reverse reaction, using glutamic acid, with 2-oxoglutarate as cosubstrate (in vitro). Has much lower affinity and transaminase activity for phenylalanine. This Bos taurus (Bovine) protein is Tyrosine aminotransferase (TAT).